The primary structure comprises 300 residues: Folate-binding protein 1 (300 aa).

The signal sequence occupies residues 1–28 (MGRCLTKKVFLIQSPILFLHLLISLSSG). 5 disulfide bridges follow: Cys-38/Cys-76, Cys-68/Cys-111, Cys-77/Cys-114, Cys-102/Cys-139, and Cys-132/Cys-178. N-linked (GlcNAc...) asparagine glycosylation occurs at Asn-173. Residues 238–258 (MTTIQKISLGMSFLIAGMFLI) traverse the membrane as a helical segment.

Belongs to the folate receptor family. Expressed in leaves.

It is found in the membrane. Folic acid-binding protein involved in salicylic acid- (SA-) induced folate accumulation by triggering uptake and accumulation of folic acid in cells. May be implicated in the transport of the folates from the site of production (leaves) to the site of storage (fruits and seeds) and utilization (roots). In Arabidopsis thaliana (Mouse-ear cress), this protein is Folate-binding protein 1.